The sequence spans 120 residues: NAD(P)H-quinone oxidoreductase subunit 3 (120 aa).

3 helical membrane passes run 7-27 (YEYV…ALTA), 64-84 (MFAL…PWAV), and 89-109 (LGLL…VALV).

The protein belongs to the complex I subunit 3 family. NDH-1 can be composed of about 15 different subunits; different subcomplexes with different compositions have been identified which probably have different functions.

Its subcellular location is the cellular thylakoid membrane. The catalysed reaction is a plastoquinone + NADH + (n+1) H(+)(in) = a plastoquinol + NAD(+) + n H(+)(out). It catalyses the reaction a plastoquinone + NADPH + (n+1) H(+)(in) = a plastoquinol + NADP(+) + n H(+)(out). NDH-1 shuttles electrons from an unknown electron donor, via FMN and iron-sulfur (Fe-S) centers, to quinones in the respiratory and/or the photosynthetic chain. The immediate electron acceptor for the enzyme in this species is believed to be plastoquinone. Couples the redox reaction to proton translocation, and thus conserves the redox energy in a proton gradient. Cyanobacterial NDH-1 also plays a role in inorganic carbon-concentration. This chain is NAD(P)H-quinone oxidoreductase subunit 3, found in Crocosphaera subtropica (strain ATCC 51142 / BH68) (Cyanothece sp. (strain ATCC 51142)).